The following is a 478-amino-acid chain: 5-hydroxytryptamine receptor 3A (478 aa).

A signal peptide spans 1–23 (MLLWVQQALLALLLPTLLAQGEA). The Extracellular portion of the chain corresponds to 24–241 (RRSRNTTRPA…MKFYVVIRRR (218 aa)). N28, N104, N170, and N186 each carry an N-linked (GlcNAc...) asparagine glycan. Cysteines 157 and 171 form a disulfide. The helical transmembrane segment at 242–268 (PLFYVVSLLLPSIFLMVMDIVGFYLPP) threads the bilayer. At 269-273 (NSGER) the chain is on the cytoplasmic side. Residues 274–292 (VSFKITLLLGYSVFLIIVS) traverse the membrane as a helical segment. Over 293–302 (DTLPATAIGT) the chain is Extracellular. The helical transmembrane segment at 303–321 (PLIGVYFVVCMALLVISLA) threads the bilayer. The Cytoplasmic segment spans residues 322 to 455 (ETIFIVRLVH…GSVLDKLLFH (134 aa)). The interval 389–408 (GGPQDFEKSPRDRCSPPPPP) is disordered. The span at 393 to 402 (DFEKSPRDRC) shows a compositional bias: basic and acidic residues. Positions 414–450 (AVCGLLQELSSIRQFLEKRDEIREVARDWLRVGSVLD) are HA-stretch; determines single-channel conductance in 5-HT3 receptors. A helical membrane pass occupies residues 456–475 (IYLLAVLAYSITLVMLWSIW). The Extracellular segment spans residues 476 to 478 (QYA).

Belongs to the ligand-gated ion channel (TC 1.A.9) family. 5-hydroxytryptamine receptor (TC 1.A.9.2) subfamily. HTR3A sub-subfamily. Forms homopentameric as well as heteropentameric serotonin-activated cation-selective channel complexes with HTR3B or HTR3C or HTR3D or HTR3E. The homomeric complex is functional but exhibits low conductance with modified voltage dependence, and decreased agonist and antagonist affinity. Heteropentameric complexes display properties which resemble that of neuronal serotonin-activated channels in vivo. Interacts with RIC3. In terms of tissue distribution, expressed in cerebral cortex, amygdala, hippocampus, and testis. Detected in monocytes of the spleen and tonsil, in small and large intestine, uterus, prostate, ovary and placenta.

The protein localises to the postsynaptic cell membrane. Its subcellular location is the cell membrane. It carries out the reaction Na(+)(in) = Na(+)(out). It catalyses the reaction K(+)(in) = K(+)(out). The catalysed reaction is Ca(2+)(in) = Ca(2+)(out). The enzyme catalyses Mg(2+)(in) = Mg(2+)(out). Functionally, forms serotonin (5-hydroxytryptamine/5-HT3)-activated cation-selective channel complexes, which when activated cause fast, depolarizing responses in neurons. The sequence is that of 5-hydroxytryptamine receptor 3A from Homo sapiens (Human).